We begin with the raw amino-acid sequence, 303 residues long: Probable serine/threonine-protein kinase FPV212 (303 aa).

In terms of domain architecture, Protein kinase spans 25–303; the sequence is WILGKQLGSG…NYESLKQMFL (279 aa). ATP is bound by residues 31-39 and lysine 54; that span reads LGSGGFGLV. Aspartate 160 (proton acceptor) is an active-site residue.

It belongs to the protein kinase superfamily. Ser/Thr protein kinase family. Poxviruses subfamily.

The enzyme catalyses L-seryl-[protein] + ATP = O-phospho-L-seryl-[protein] + ADP + H(+). The catalysed reaction is L-threonyl-[protein] + ATP = O-phospho-L-threonyl-[protein] + ADP + H(+). The chain is Probable serine/threonine-protein kinase FPV212 from Vertebrata (FPV).